Consider the following 382-residue polypeptide: Na(+)/H(+) antiporter NhaA (382 aa).

Helical transmembrane passes span 14 to 34 (AGGI…NSAM), 47 to 67 (FGMS…FLLI), 87 to 107 (IFPA…YVAF), 117 to 137 (GWAI…ALLG), 146 to 166 (VFLL…IALF), 171 to 191 (LSTI…MLNA), 205 to 225 (LILW…GVVI), 247 to 267 (ALHP…NAGI), 271 to 291 (GVSL…GLFL), 321 to 341 (IFAV…ISSL), and 353 to 373 (YARL…YSLL).

The protein belongs to the NhaA Na(+)/H(+) (TC 2.A.33) antiporter family.

The protein localises to the cell inner membrane. It carries out the reaction Na(+)(in) + 2 H(+)(out) = Na(+)(out) + 2 H(+)(in). Its function is as follows. Na(+)/H(+) antiporter that extrudes sodium in exchange for external protons. The sequence is that of Na(+)/H(+) antiporter NhaA from Vibrio cholerae serotype O1 (strain ATCC 39541 / Classical Ogawa 395 / O395).